The following is a 274-amino-acid chain: MATPTPFQSQIYRSLPEIERADAIVERISKAIALGLLKVGERLPPEAALSEMFGVGGATLREALSELRERGVVETRRGRSGGTFVVNQPEPETDIMREWFLSTSISEIRDIGDEHSAIAAATIRLACERAEAHDFDRLQELARALVLAETPETRASADSRFHIELAVSAQSPRLANAEIRLQEETVRQLWAPFTVAEAYDPERATAEHLELVRAVAQDQPERAQKLTLEHIRRNIFHLIDTKLVLGYAQSRPSSPATAPDGSSSAEAAMIQEGQ.

One can recognise an HTH gntR-type domain in the interval 18-88 (IERADAIVER…RSGGTFVVNQ (71 aa)). The segment at residues 46–65 (EAALSEMFGVGGATLREALS) is a DNA-binding region (H-T-H motif). A compositionally biased stretch (polar residues) spans 250 to 265 (SRPSSPATAPDGSSSA). Residues 250–274 (SRPSSPATAPDGSSSAEAAMIQEGQ) form a disordered region.

May regulate the transcription of the rmpAB operon. The sequence is that of Putative HTH-type transcriptional regulator RmpR (rmpR) from Mycobacterium gastri.